Reading from the N-terminus, the 631-residue chain is Occlusion-derived virus envelope protein E66 (631 aa).

Belongs to the baculoviridae E66 family.

It is found in the virion membrane. In terms of biological role, component of the polyhedra envelope. This chain is Occlusion-derived virus envelope protein E66, found in Leucania separata nucleopolyhedrovirus (LsNPV).